Reading from the N-terminus, the 128-residue chain is Holo-[acyl-carrier-protein] synthase (128 aa).

Mg(2+) contacts are provided by Asp10 and Glu59.

The protein belongs to the P-Pant transferase superfamily. AcpS family. Requires Mg(2+) as cofactor.

Its subcellular location is the cytoplasm. The enzyme catalyses apo-[ACP] + CoA = holo-[ACP] + adenosine 3',5'-bisphosphate + H(+). In terms of biological role, transfers the 4'-phosphopantetheine moiety from coenzyme A to a Ser of acyl-carrier-protein. This is Holo-[acyl-carrier-protein] synthase from Syntrophotalea carbinolica (strain DSM 2380 / NBRC 103641 / GraBd1) (Pelobacter carbinolicus).